Consider the following 178-residue polypeptide: CDP-diacylglycerol--glycerol-3-phosphate 3-phosphatidyltransferase (178 aa).

Helical transmembrane passes span 5–25 (PNYL…LFYI), 32–52 (KLGA…GYIA), 61–81 (FGKM…TIML), and 145–165 (IIYL…LTII).

This sequence belongs to the CDP-alcohol phosphatidyltransferase class-I family.

Its subcellular location is the cell membrane. It carries out the reaction a CDP-1,2-diacyl-sn-glycerol + sn-glycerol 3-phosphate = a 1,2-diacyl-sn-glycero-3-phospho-(1'-sn-glycero-3'-phosphate) + CMP + H(+). It participates in phospholipid metabolism; phosphatidylglycerol biosynthesis; phosphatidylglycerol from CDP-diacylglycerol: step 1/2. Its function is as follows. This protein catalyzes the committed step to the synthesis of the acidic phospholipids. The sequence is that of CDP-diacylglycerol--glycerol-3-phosphate 3-phosphatidyltransferase (pgsA) from Rickettsia typhi (strain ATCC VR-144 / Wilmington).